The sequence spans 311 residues: MSVALRSFAETSPRLTHLQRLEAESIHIMRETVAETENPVMLYSIGKDSSVLLHLALKAFAPGRLPFPLLHIDTTWKFREMIAFRDRRAKELGLDLLVYTNPDGLARGIGPVSHGSEVHTDVMKTQALRQALDKHRFDAAFGGARRDEEASRAKERVVSLRTAQHRWDPKRQRAEPWHLYNLKKRRGESLRVFPLSNWTELDIWLYIERENIPIVPLYYAAERPVVRREGQLIMVDDARLPLEPGETPELRKVRFRTLGCYPLTGAVESEAATLPEIIGETLAARTSERQGRVIDKDGAGAMERKKQEGYF.

This sequence belongs to the PAPS reductase family. CysD subfamily. As to quaternary structure, heterodimer composed of CysD, the smaller subunit, and CysN.

It catalyses the reaction sulfate + ATP + H(+) = adenosine 5'-phosphosulfate + diphosphate. It participates in sulfur metabolism; hydrogen sulfide biosynthesis; sulfite from sulfate: step 1/3. Functionally, with CysN forms the ATP sulfurylase (ATPS) that catalyzes the adenylation of sulfate producing adenosine 5'-phosphosulfate (APS) and diphosphate, the first enzymatic step in sulfur assimilation pathway. APS synthesis involves the formation of a high-energy phosphoric-sulfuric acid anhydride bond driven by GTP hydrolysis by CysN coupled to ATP hydrolysis by CysD. The chain is Sulfate adenylyltransferase subunit 2 from Methylobacterium sp. (strain 4-46).